Here is a 256-residue protein sequence, read N- to C-terminus: Small ribosomal subunit protein eS1 (256 aa).

Position 2 is an N-acetylalanine; partial (A2).

This sequence belongs to the eukaryotic ribosomal protein eS1 family. Component of the small ribosomal subunit. Mature ribosomes consist of a small (40S) and a large (60S) subunit. The 40S subunit contains about 33 different proteins and 1 molecule of RNA (18S). The 60S subunit contains about 49 different proteins and 3 molecules of RNA (25S, 5.8S and 5S).

Its subcellular location is the cytoplasm. The sequence is that of Small ribosomal subunit protein eS1 from Lentinula edodes (Shiitake mushroom).